Here is a 174-residue protein sequence, read N- to C-terminus: Small ribosomal subunit protein uS5 (174 aa).

In terms of domain architecture, S5 DRBM spans 20-83; sequence IEDQLVAINR…EAGKKRMIKV (64 aa).

Belongs to the universal ribosomal protein uS5 family. As to quaternary structure, part of the 30S ribosomal subunit. Contacts proteins S4 and S8.

With S4 and S12 plays an important role in translational accuracy. Its function is as follows. Located at the back of the 30S subunit body where it stabilizes the conformation of the head with respect to the body. This Lactobacillus gasseri (strain ATCC 33323 / DSM 20243 / BCRC 14619 / CIP 102991 / JCM 1131 / KCTC 3163 / NCIMB 11718 / NCTC 13722 / AM63) protein is Small ribosomal subunit protein uS5.